The following is an 87-amino-acid chain: Small ribosomal subunit protein uS17 (87 aa).

It belongs to the universal ribosomal protein uS17 family. As to quaternary structure, part of the 30S ribosomal subunit.

Its function is as follows. One of the primary rRNA binding proteins, it binds specifically to the 5'-end of 16S ribosomal RNA. The polypeptide is Small ribosomal subunit protein uS17 (Pelotomaculum thermopropionicum (strain DSM 13744 / JCM 10971 / SI)).